The following is a 279-amino-acid chain: tRNA pseudouridine synthase B (279 aa).

Catalysis depends on Asp38, which acts as the Nucleophile.

It belongs to the pseudouridine synthase TruB family. Type 1 subfamily.

It catalyses the reaction uridine(55) in tRNA = pseudouridine(55) in tRNA. Its function is as follows. Responsible for synthesis of pseudouridine from uracil-55 in the psi GC loop of transfer RNAs. The polypeptide is tRNA pseudouridine synthase B (Acholeplasma laidlawii (strain PG-8A)).